A 520-amino-acid chain; its full sequence is Genome polyprotein (520 aa).

At S2 the chain carries N-acetylserine; by host. Residues S2–K23 are interaction with STAT1. An interaction with EIF2AK2/PKR region spans residues S2–P58. Positions S2–R59 are interaction with DDX3X. Positions S2 to A75 are disordered. Topologically, residues S2–N168 are cytoplasmic. Short sequence motifs (nuclear localization signal) lie at residues P5–R13 and T38–R43. Residues P7–N16 show a composition bias toward basic residues. S53 bears the Phosphoserine; by host mark. 2 consecutive short sequence motifs (nuclear localization signal) follow at residues P58–P64 and P66–P71. Residues P58 to A68 show a composition bias toward basic residues. At S99 the chain carries Phosphoserine; by host. The tract at residues P112–A152 is important for endoplasmic reticulum and mitochondrial localization. The residue at position 116 (S116) is a Phosphoserine; by host PKA. The interaction with APOA2 stretch occupies residues V122 to S173. The important for lipid droplets localization stretch occupies residues Y164–G167. A helical transmembrane segment spans residues L169–A189. The propeptide at L178 to A191 is ER anchor for the core protein, removed in mature form by host signal peptidase. Residues S190–G358 lie on the Lumenal side of the membrane. N-linked (GlcNAc...) asparagine; by host glycans are attached at residues N196, N209, N234, and N250. The tract at residues L265–R296 is important for fusion. A glycan (N-linked (GlcNAc...) asparagine; by host) is linked at N305. A helical membrane pass occupies residues L359–A379. Topologically, residues G380–T520 are lumenal. Residues N385–K411 are HVR1. N418 carries N-linked (GlcNAc...) asparagine; by host glycosylation. N-linked (GlcNAc...) (high mannose) asparagine; by host glycans are attached at residues N424, N431, and N449. C453 and C460 are joined by a disulfide. The segment at T474 to S479 is HVR2. Residues I480–R493 form a CD81-binding 1 region. 2 disulfides stabilise this stretch: C487–C495 and C504–C509.

It belongs to the hepacivirus polyprotein family. In terms of assembly, homooligomer. Interacts with E1 (via C-terminus). Interacts with the non-structural protein 5A. Interacts (via N-terminus) with host STAT1 (via SH2 domain); this interaction results in decreased STAT1 phosphorylation and ubiquitin-mediated proteasome-dependent STAT1 degradation, leading to decreased IFN-stimulated gene transcription. Interacts with host STAT3; this interaction constitutively activates STAT3. Interacts with host LTBR receptor. Interacts with host TNFRSF1A receptor and possibly induces apoptosis. Interacts with host HNRPK. Interacts with host YWHAE. Interacts with host UBE3A/E6AP. Interacts with host DDX3X. Interacts with host APOA2. Interacts with host RXRA protein. Interacts with host SP110 isoform 3/Sp110b; this interaction sequesters the transcriptional corepressor SP110 away from the nucleus. Interacts with host CREB3 nuclear transcription protein; this interaction triggers cell transformation. Interacts with host ACY3. Interacts with host C1QR1. Interacts with host RBM24; this interaction, which enhances the interaction of the mature core protein with 5'-UTR, may inhibit viral translation and favor replication. Interacts with host EIF2AK2/PKR; this interaction induces the autophosphorylation of EIF2AK2. Part of the viral assembly initiation complex composed of NS2, E1, E2, NS3, NS4A, NS5A and the mature core protein. As to quaternary structure, forms a heterodimer with envelope glycoprotein E2. Interacts with mature core protein. Interacts with protease NS2. The heterodimer E1/E2 interacts with host CLDN1; this interaction plays a role in viral entry into host cell. Interacts with host SPSB2 (via C-terminus). Part of the viral assembly initiation complex composed of NS2, E1, E2, NS3, NS4A, NS5A and the mature core protein. Forms a heterodimer with envelope glycoprotein E1. Interacts with host CD81 and SCARB1 receptors; these interactions play a role in viral entry into host cell. Interacts with host EIF2AK2/PKR; this interaction inhibits EIF2AK2 and probably allows the virus to evade the innate immune response. Interacts with host CD209/DC-SIGN and CLEC4M/DC-SIGNR. Interact with host SPCS1; this interaction is essential for viral particle assembly. Interacts with protease NS2. The heterodimer E1/E2 interacts with host CLDN1; this interaction plays a role in viral entry into host cell. Part of the viral assembly initiation complex composed of NS2, E1, E2, NS3, NS4A, NS5A and the mature core protein. Specific enzymatic cleavages in vivo yield mature proteins. The structural proteins, core, E1, E2 and p7 are produced by proteolytic processing by host signal peptidases. The core protein precursor is synthesized as a 23 kDa, which is retained in the ER membrane through the hydrophobic signal peptide. Cleavage by the signal peptidase releases the 21 kDa mature core protein. The cleavage of the core protein precursor occurs between aminoacids 176 and 188 but the exact cleavage site is not known. Some degraded forms of the core protein appear as well during the course of infection. The other proteins (p7, NS2, NS3, NS4A, NS4B, NS5A and NS5B) are cleaved by the viral proteases. Autoprocessing between NS2 and NS3 is mediated by the NS2 cysteine protease catalytic domain and regulated by the NS3 N-terminal domain. Post-translationally, phosphorylated by host PKC and PKA. In terms of processing, ubiquitinated; mediated by UBE3A and leading to core protein subsequent proteasomal degradation. Highly N-glycosylated.

The protein resides in the host endoplasmic reticulum membrane. It localises to the host mitochondrion membrane. The protein localises to the virion. Its subcellular location is the host cytoplasm. It is found in the host nucleus. The protein resides in the host lipid droplet. It localises to the virion membrane. Functionally, packages viral RNA to form a viral nucleocapsid, and promotes virion budding. Participates in the viral particle production as a result of its interaction with the non-structural protein 5A. Binds RNA and may function as a RNA chaperone to induce the RNA structural rearrangements taking place during virus replication. Modulates viral translation initiation by interacting with viral IRES and 40S ribosomal subunit. Affects various cell signaling pathways, host immunity and lipid metabolism. Prevents the establishment of cellular antiviral state by blocking the interferon-alpha/beta (IFN-alpha/beta) and IFN-gamma signaling pathways and by blocking the formation of phosphorylated STAT1 and promoting ubiquitin-mediated proteasome-dependent degradation of STAT1. Activates STAT3 leading to cellular transformation. Regulates the activity of cellular genes, including c-myc and c-fos. May repress the promoter of p53, and sequester CREB3 and SP110 isoform 3/Sp110b in the cytoplasm. Represses cell cycle negative regulating factor CDKN1A, thereby interrupting an important check point of normal cell cycle regulation. Targets transcription factors involved in the regulation of inflammatory responses and in the immune response: suppresses TNF-induced NF-kappa-B activation, and activates AP-1. Binds to dendritic cells (DCs) via C1QR1, resulting in down-regulation of T-lymphocytes proliferation. Alters lipid metabolism by interacting with hepatocellular proteins involved in lipid accumulation and storage. Induces up-regulation of FAS promoter activity, and thereby contributes to the increased triglyceride accumulation in hepatocytes (steatosis). In terms of biological role, forms a heterodimer with envelope glycoprotein E2, which mediates virus attachment to the host cell, virion internalization through clathrin-dependent endocytosis and fusion with host membrane. Fusion with the host cell is most likely mediated by both E1 and E2, through conformational rearrangements of the heterodimer required for fusion rather than a classical class II fusion mechanism. E1/E2 heterodimer binds host apolipoproteins such as APOB and ApoE thereby forming a lipo-viro-particle (LVP). APOE associated to the LVP allows the initial virus attachment to cell surface receptors such as the heparan sulfate proteoglycans (HSPGs), syndecan-1 (SDC1), syndecan-1 (SDC2), the low-density lipoprotein receptor (LDLR) and scavenger receptor class B type I (SCARB1). The cholesterol transfer activity of SCARB1 allows E2 exposure and binding of E2 to SCARB1 and the tetraspanin CD81. E1/E2 heterodimer binding on CD81 activates the epithelial growth factor receptor (EGFR) signaling pathway. Diffusion of the complex E1-E2-EGFR-SCARB1-CD81 to the cell lateral membrane allows further interaction with Claudin 1 (CLDN1) and occludin (OCLN) to finally trigger HCV entry. Forms a heterodimer with envelope glycoprotein E1, which mediates virus attachment to the host cell, virion internalization through clathrin-dependent endocytosis and fusion with host membrane. Fusion with the host cell is most likely mediated by both E1 and E2, through conformational rearrangements of the heterodimer required for fusion rather than a classical class II fusion mechanism. The interaction between envelope glycoprotein E2 and host apolipoprotein E/APOE allows the proper assembly, maturation and infectivity of the viral particles. This interaction is probably promoted via the up-regulation of cellular autophagy by the virus. E1/E2 heterodimer binds host apolipoproteins such as APOB and APOE thereby forming a lipo-viro-particle (LVP). APOE associated to the LVP allows the initial virus attachment to cell surface receptors such as the heparan sulfate proteoglycans (HSPGs), syndecan-1 (SDC1), syndecan-1 (SDC2), the low-density lipoprotein receptor (LDLR) and scavenger receptor class B type I (SCARB1). The cholesterol transfer activity of SCARB1 allows E2 exposure and binding of E2 to SCARB1 and the tetraspanin CD81. E1/E2 heterodimer binding on CD81 activates the epithelial growth factor receptor (EGFR) signaling pathway. Diffusion of the complex E1-E2-EGFR-SCARB1-CD81 to the cell lateral membrane allows further interaction with Claudin 1 (CLDN1) and occludin (OCLN) to finally trigger HCV entry. Inhibits host EIF2AK2/PKR activation, preventing the establishment of an antiviral state. Viral ligand for CD209/DC-SIGN and CLEC4M/DC-SIGNR, which are respectively found on dendritic cells (DCs), and on liver sinusoidal endothelial cells and macrophage-like cells of lymph node sinuses. These interactions allow the capture of circulating HCV particles by these cells and subsequent facilitated transmission to permissive cells such as hepatocytes and lymphocyte subpopulations. This chain is Genome polyprotein, found in Hepatitis C virus (isolate HCV-KF) (HCV).